The primary structure comprises 326 residues: Nucleoporin Nup37 (326 aa).

4 WD repeats span residues 70–117 (HHGV…KNEY), 122–162 (GHSD…TAHF), 164–203 (LHSP…AILS), and 294–325 (GSVA…WVTE).

In terms of assembly, component of the Nup107-160 subcomplex of the nuclear pore complex (NPC). The Nup107-160 subcomplex includes NUP160, NUP133, NUP107, NUP98, NUP85, NUP43, NUP37, SEH1 and SEC13.

The protein localises to the chromosome. It localises to the centromere. Its subcellular location is the kinetochore. It is found in the nucleus. The protein resides in the nuclear pore complex. Its function is as follows. Component of the Nup107-160 subcomplex of the nuclear pore complex (NPC). The Nup107-160 subcomplex is required for the assembly of a functional NPC. The Nup107-160 subcomplex is also required for normal kinetochore microtubule attachment, mitotic progression and chromosome segregation. In Mus musculus (Mouse), this protein is Nucleoporin Nup37 (Nup37).